Here is a 213-residue protein sequence, read N- to C-terminus: Superoxide dismutase [Mn] (213 aa).

The Mn(2+) site is built by His27, His82, Asp168, and His172.

The protein belongs to the iron/manganese superoxide dismutase family. Homodimer. Requires Mn(2+) as cofactor.

It catalyses the reaction 2 superoxide + 2 H(+) = H2O2 + O2. In terms of biological role, destroys superoxide anion radicals which are normally produced within the cells and which are toxic to biological systems. The polypeptide is Superoxide dismutase [Mn] (sodA) (Mannheimia haemolytica (Pasteurella haemolytica)).